The chain runs to 621 residues: Rab11 family-interacting protein 4A (621 aa).

2 EF-hand domains span residues 14-49 and 47-82; these read AFLKKLKEVFDVCDEDADGYIRVEHFVDLGLQFGQG and GQGDEVKKFAKYLDPNAHGRINFKDFCHGVFAIKGC. Ca(2+) contacts are provided by D27, D29, D31, Y33, H38, D60, N62, R66, and D71. 2 disordered regions span residues 132–172 and 203–243; these read YSDE…KEEG and DYGE…GQTP. The span at 151-161 shows a compositional bias: low complexity; the sequence is AADSGAGSESS. Basic and acidic residues predominate over residues 162–172; sequence EGGRQDDKEEG. Residues 225-243 show a composition bias toward polar residues; the sequence is TNGFSDLGSSLPSSAGQTP. Residues 348–556 are a coiled coil; that stretch reads DLKSKLKQEN…LNGQILSLSL (209 aa). Residues 558–620 enclose the FIP-RBD domain; that stretch reads EAKNLFACHT…DHNPSILEIK (63 aa).

Homodimer. Forms a complex with Rab11 (rab11a or rab11b) and arf6. In terms of tissue distribution, isoform 1 is predominantly expressed in neural tissues. Isoform B is expressed ubiquitously. In the developing retina, it is expressed in progenitors throughout the retina at early stages and becomes restricted to the ganglion cell layer and ciliary marginal zone as differentiation proceeds.

It localises to the recycling endosome membrane. Its subcellular location is the cleavage furrow. The protein resides in the midbody. The protein localises to the cytoplasmic vesicle. In terms of biological role, acts as a regulator of endocytic traffic by participating in membrane delivery. Required for the abscission step in cytokinesis, possibly by acting as an 'address tag' delivering recycling endosome membranes to the cleavage furrow during late cytokinesis. May play a role in differentiation during retinal development. The sequence is that of Rab11 family-interacting protein 4A (rab11fip4a) from Danio rerio (Zebrafish).